The sequence spans 102 residues: Large ribosomal subunit protein bL21 (102 aa).

This sequence belongs to the bacterial ribosomal protein bL21 family. As to quaternary structure, part of the 50S ribosomal subunit. Contacts protein L20.

Its function is as follows. This protein binds to 23S rRNA in the presence of protein L20. This is Large ribosomal subunit protein bL21 from Exiguobacterium sp. (strain ATCC BAA-1283 / AT1b).